The following is a 230-amino-acid chain: Orotidine 5'-phosphate decarboxylase (230 aa).

Residues D10, K32, 59-68 (DLKYHDIPNT), T119, R180, Q189, G209, and R210 contribute to the substrate site. K61 serves as the catalytic Proton donor.

This sequence belongs to the OMP decarboxylase family. Type 1 subfamily. Homodimer.

The enzyme catalyses orotidine 5'-phosphate + H(+) = UMP + CO2. It functions in the pathway pyrimidine metabolism; UMP biosynthesis via de novo pathway; UMP from orotate: step 2/2. Catalyzes the decarboxylation of orotidine 5'-monophosphate (OMP) to uridine 5'-monophosphate (UMP). The protein is Orotidine 5'-phosphate decarboxylase of Haemophilus influenzae (strain ATCC 51907 / DSM 11121 / KW20 / Rd).